A 741-amino-acid chain; its full sequence is MAEPVSPLKHFVLAKKAITAIFDQLLEFVTEGSHFVEATYKNPELDRIATEDDLVEMQGYKDKLSIIGEVLSRRHMKVAFFGRTSSGKSSVINAMLWDKVLPSGIGHITNCFLSVEGTDGDKAYLMTEGSDEKKSVKTVNQLAHALHMDKDLKAGCLVRVFWPKAKCALLRDDLVLVDSPGTDVTTELDSWIDKFCLDADVFVLVANSESTLMNTEKHFFHKVNERLSKPNIFILNNRWDASASEPEYMEDVRRQHMERCLHFLVEELKVVNALEAQNRIFFVSAKEVLSARKQKAQGMPESGVALAEGFHARLQEFQNFEQIFEECISQSAVKTKFEQHTIRAKQILATVKNIMDSVNLAAEDKRHYSVEEREDQIDRLDFIRNQMNLLTLDVKKKIKEVTEEVANKVSCAMTDEICRLSVLVDEFCSEFHPNPDVLKIYKSELNKHIEDGMGRNLADRCTDEVNALVLQTQQEIIENLKPLLPAGIQDKLHTLIPCKKFDLSYNLNYHKLCSDFQEDIVFRFSLGWSSLVHRFLGPRNAQRVLLGLSEPIFQLPRSLASTPTAPTTPATPDNASQEELMITLVTGLASVTSRTSMGIIIVGGVIWKTIGWKLLSVSLTMYGALYLYERLSWTTHAKERAFKQQFVNYATEKLRMIVSSTSANCSHQVKQQIATTFARLCQQVDITQKQLEEEIARLPKEIDQLEKIQNNSKLLRNKAVQLENELENFTKQFLPSSNEES.

Topologically, residues 1 to 584 (MAEPVSPLKH…ASQEELMITL (584 aa)) are cytoplasmic. The segment at 9 to 73 (KHFVLAKKAI…LSIIGEVLSR (65 aa)) is part of a helix bundle domain, formed by helices from N-terminal and C-terminal regions. Residues 72–321 (SRRHMKVAFF…ARLQEFQNFE (250 aa)) form the Dynamin-type G domain. A G1 motif region spans residues 82–89 (GRTSSGKS). GTP is bound at residue 85 to 90 (SSGKSS). Residues 108–109 (IT) form a G2 motif region. Residues 178 to 181 (DSPG) form a G3 motif region. 237–240 (NRWD) is a binding site for GTP. The tract at residues 237-240 (NRWD) is G4 motif. Position 266 (Glu-266) is a region of interest, G5 motif. The GTP site is built by Ser-284 and Lys-286. The tract at residues 338 to 364 (EQHTIRAKQILATVKNIMDSVNLAAED) is part of a helix bundle domain, formed by helices from N-terminal and C-terminal regions. The stretch at 371–408 (EEREDQIDRLDFIRNQMNLLTLDVKKKIKEVTEEVANK) forms a coiled coil. Residues 585–605 (VTGLASVTSRTSMGIIIVGGV) form a helical membrane-spanning segment. Topologically, residues 606-608 (IWK) are mitochondrial intermembrane. The chain crosses the membrane as a helical span at residues 609–629 (TIGWKLLSVSLTMYGALYLYE). Residues 630–741 (RLSWTTHAKE…QFLPSSNEES (112 aa)) lie on the Cytoplasmic side of the membrane. The stretch at 679–734 (RLCQQVDITQKQLEEEIARLPKEIDQLEKIQNNSKLLRNKAVQLENELENFTKQFL) forms a coiled coil. The part of a helix bundle domain, formed by helices from N-terminal and C-terminal regions stretch occupies residues 703 to 734 (DQLEKIQNNSKLLRNKAVQLENELENFTKQFL).

The protein belongs to the TRAFAC class dynamin-like GTPase superfamily. Dynamin/Fzo/YdjA family. Mitofusin subfamily. As to quaternary structure, homodimer, also in the absence of bound GTP. Forms higher oligomers in the presence of a transition state GTP analog. Forms homomultimers and heteromultimers with MFN2. Oligomerization is essential for mitochondrion fusion. Component of a high molecular weight multiprotein complex. Interacts with VAT1. Interacts with THG1L; THG1L probably functions as a guanyl-nucleotide exchange factor/GEF, activating MFN1. In terms of processing, ubiquitinated by non-degradative ubiquitin by PRKN. Deubiquitination by USP30 inhibits mitochondrial fusion. Ubiquitinated by MARCHF5. When mitochondria are depolarized and dysfunctional, it is ubiquitinated by a SCF (SKP1-CUL1-F-box protein) E3 ubiquitin-protein ligase complex that contains FBXO7 and PRKN. Detected in kidney and heart (at protein level). Ubiquitous. Expressed at slightly higher level in kidney and heart. Isoform 2 may be overexpressed in some tumors, such as lung cancers.

Its subcellular location is the mitochondrion outer membrane. It localises to the cytoplasm. The enzyme catalyses GTP + H2O = GDP + phosphate + H(+). Its function is as follows. Mitochondrial outer membrane GTPase that mediates mitochondrial clustering and fusion. Membrane clustering requires GTPase activity. It may involve a major rearrangement of the coiled coil domains. Mitochondria are highly dynamic organelles, and their morphology is determined by the equilibrium between mitochondrial fusion and fission events. Overexpression induces the formation of mitochondrial networks (in vitro). Has low GTPase activity. In Homo sapiens (Human), this protein is Mitofusin-1 (MFN1).